A 145-amino-acid chain; its full sequence is Cuticle protein 7 (145 aa).

A Chitin-binding type R&amp;R domain is found at 41 to 114; it reads PVNVATSYHA…VASNALPVGP (74 aa).

This chain is Cuticle protein 7, found in Blaberus craniifer (Death's head cockroach).